Here is a 506-residue protein sequence, read N- to C-terminus: Histidine ammonia-lyase (506 aa).

Residues 143 to 145 constitute a cross-link (5-imidazolinone (Ala-Gly)); sequence ASG. At Ser-144 the chain carries 2,3-didehydroalanine (Ser).

This sequence belongs to the PAL/histidase family. Post-translationally, contains an active site 4-methylidene-imidazol-5-one (MIO), which is formed autocatalytically by cyclization and dehydration of residues Ala-Ser-Gly.

The protein localises to the cytoplasm. It carries out the reaction L-histidine = trans-urocanate + NH4(+). Its pathway is amino-acid degradation; L-histidine degradation into L-glutamate; N-formimidoyl-L-glutamate from L-histidine: step 1/3. The chain is Histidine ammonia-lyase from Salmonella typhi.